The following is a 601-amino-acid chain: Elongation factor 4 (601 aa).

The 183-residue stretch at 6-188 (NRIRNFCIIA…QVVTKIAPPK (183 aa)) folds into the tr-type G domain. Residues 18 to 23 (DHGKST) and 135 to 138 (NKID) each bind GTP.

Belongs to the TRAFAC class translation factor GTPase superfamily. Classic translation factor GTPase family. LepA subfamily.

Its subcellular location is the cell membrane. It carries out the reaction GTP + H2O = GDP + phosphate + H(+). In terms of biological role, required for accurate and efficient protein synthesis under certain stress conditions. May act as a fidelity factor of the translation reaction, by catalyzing a one-codon backward translocation of tRNAs on improperly translocated ribosomes. Back-translocation proceeds from a post-translocation (POST) complex to a pre-translocation (PRE) complex, thus giving elongation factor G a second chance to translocate the tRNAs correctly. Binds to ribosomes in a GTP-dependent manner. This is Elongation factor 4 from Desulforamulus reducens (strain ATCC BAA-1160 / DSM 100696 / MI-1) (Desulfotomaculum reducens).